The chain runs to 380 residues: tRNA-specific 2-thiouridylase MnmA (380 aa).

ATP contacts are provided by residues Ala10–Ser17 and Leu36. Cys106 acts as the Nucleophile in catalysis. A disulfide bond links Cys106 and Cys202. ATP is bound at residue Gly130. Positions Lys152–Gln154 are interaction with tRNA. Residue Cys202 is the Cysteine persulfide intermediate of the active site. The interaction with tRNA stretch occupies residues Arg308–Tyr309.

The protein belongs to the MnmA/TRMU family.

It localises to the cytoplasm. The enzyme catalyses S-sulfanyl-L-cysteinyl-[protein] + uridine(34) in tRNA + AH2 + ATP = 2-thiouridine(34) in tRNA + L-cysteinyl-[protein] + A + AMP + diphosphate + H(+). Functionally, catalyzes the 2-thiolation of uridine at the wobble position (U34) of tRNA, leading to the formation of s(2)U34. The sequence is that of tRNA-specific 2-thiouridylase MnmA from Leptospira biflexa serovar Patoc (strain Patoc 1 / Ames).